Here is a 494-residue protein sequence, read N- to C-terminus: UDP-glucose 6-dehydrogenase (494 aa).

NAD(+) is bound by residues 11–16 (GAGYVG), D36, R41, and 89–93 (VNTPT). The interval 88-110 (SVNTPTKTYGMGKGRAADLKYIE) is disordered. An N6-acetyllysine modification is found at K107. The segment at 129–135 (KSTVPVR) is allosteric switch region. An NAD(+)-binding site is contributed by 130 to 132 (STV). E161 (proton donor/acceptor) is an active-site residue. Residues 161–165 (EFLAE), 220–224 (KLTAN), R260, and 267–273 (KASVGFG) contribute to the substrate site. Residue E165 coordinates NAD(+). K220 acts as the Proton donor/acceptor in catalysis. C276 serves as the catalytic Nucleophile. 276-279 (CFQK) is a binding site for NAD(+). The tract at residues 321 to 325 (SLFNT) is important for formation of active hexamer structure. 338 to 339 (FK) serves as a coordination point for substrate. NAD(+) is bound at residue R346. R442 is a binding site for substrate. The disordered stretch occupies residues 466-494 (VSSKRIPYAPSGEIPKFSLQDMPNKKPRV). A Phosphoserine modification is found at S476.

Belongs to the UDP-glucose/GDP-mannose dehydrogenase family. Homohexamer.

The catalysed reaction is UDP-alpha-D-glucose + 2 NAD(+) + H2O = UDP-alpha-D-glucuronate + 2 NADH + 3 H(+). It participates in nucleotide-sugar biosynthesis; UDP-alpha-D-glucuronate biosynthesis; UDP-alpha-D-glucuronate from UDP-alpha-D-glucose: step 1/1. With respect to regulation, UDP-alpha-D-xylose (UDX) acts as a feedback inhibitor. It binds at the same site as the substrate, but functions as allosteric inhibitor by triggering a conformation change that disrupts the active hexameric ring structure and gives rise to an inactive, horseshoe-shaped hexamer. In terms of biological role, catalyzes the formation of UDP-alpha-D-glucuronate, a constituent of complex glycosaminoglycans. Required for the biosynthesis of chondroitin sulfate and heparan sulfate. Required for embryonic development via its role in the biosynthesis of glycosaminoglycans. Required for proper brain and neuronal development. This chain is UDP-glucose 6-dehydrogenase (UGDH), found in Bos taurus (Bovine).